We begin with the raw amino-acid sequence, 425 residues long: Serine--tRNA ligase (425 aa).

230 to 232 (TAE) is a binding site for L-serine. 261-263 (RSE) lines the ATP pocket. Glutamate 284 contributes to the L-serine binding site. 348-351 (EISS) is an ATP binding site. L-serine is bound at residue serine 384.

This sequence belongs to the class-II aminoacyl-tRNA synthetase family. Type-1 seryl-tRNA synthetase subfamily. Homodimer. The tRNA molecule binds across the dimer.

It localises to the cytoplasm. It carries out the reaction tRNA(Ser) + L-serine + ATP = L-seryl-tRNA(Ser) + AMP + diphosphate + H(+). The enzyme catalyses tRNA(Sec) + L-serine + ATP = L-seryl-tRNA(Sec) + AMP + diphosphate + H(+). The protein operates within aminoacyl-tRNA biosynthesis; selenocysteinyl-tRNA(Sec) biosynthesis; L-seryl-tRNA(Sec) from L-serine and tRNA(Sec): step 1/1. Functionally, catalyzes the attachment of serine to tRNA(Ser). Is also able to aminoacylate tRNA(Sec) with serine, to form the misacylated tRNA L-seryl-tRNA(Sec), which will be further converted into selenocysteinyl-tRNA(Sec). This is Serine--tRNA ligase from Maridesulfovibrio salexigens (strain ATCC 14822 / DSM 2638 / NCIMB 8403 / VKM B-1763) (Desulfovibrio salexigens).